A 410-amino-acid polypeptide reads, in one-letter code: Phytoene synthase 1, chloroplastic (410 aa).

A chloroplast-targeting transit peptide spans 1 to 62; that stretch reads MAIILVRAAS…EAGRPSPAVY (62 aa).

Belongs to the phytoene/squalene synthase family. As to quaternary structure, monomer. As to expression, expressed in embryos, endosperm and seedling leaves. Expressed in leaves and endosperm.

It localises to the plastid. The protein resides in the chloroplast stroma. It catalyses the reaction 2 (2E,6E,10E)-geranylgeranyl diphosphate = 15-cis-phytoene + 2 diphosphate. The protein operates within carotenoid biosynthesis; phytoene biosynthesis; all-trans-phytoene from geranylgeranyl diphosphate: step 1/1. In terms of biological role, catalyzes the conversion of geranylgeranyl diphosphate to phytoene. Mediates the first committed step in carotenoid biosynthesis. The polypeptide is Phytoene synthase 1, chloroplastic (Zea mays (Maize)).